Reading from the N-terminus, the 603-residue chain is Beta-hexosaminidase (603 aa).

Residues 1 to 19 form the signal peptide; it reads MAYFRLYAVLLAVASSVAA. Catalysis depends on charge relay system residues Asp-225, His-278, and Glu-349. A disulfide bridge connects residues Cys-293 and Cys-354. N-linked (GlcNAc...) asparagine glycosylation occurs at Asn-356. A disulfide bridge links Cys-451 with Cys-486. 2 N-linked (GlcNAc...) asparagine glycosylation sites follow: Asn-503 and Asn-528. Cys-586 and Cys-593 are oxidised to a cystine.

Belongs to the glycosyl hydrolase 20 family. Homodimer.

Its subcellular location is the secreted. The catalysed reaction is Hydrolysis of terminal non-reducing N-acetyl-D-hexosamine residues in N-acetyl-beta-D-hexosaminides.. In terms of biological role, part of the binary chitinolytic system. Involved in hydrolysis of chitobiose and higher chito-oligomers (produced from cell wall chitin by endochitinases), thus contributing to the formation of germ tubes, fruit-bodies and septa during hyphenation. Hydrolyzes synthetic substrates p-nitrophenyl-beta-N-acetyl-glucosamine (pNP-beta-GlcNAc), p-nitrophenyl-beta-N-acetyl-galactosamine (pNP-beta-GalNAc) and 5-bromo-4-chloro-3-indoyl-beta-D-N-glucosaminide (X-GlcNAc). In Emericella nidulans (Aspergillus nidulans), this protein is Beta-hexosaminidase.